We begin with the raw amino-acid sequence, 527 residues long: Tubulin-specific chaperone E (527 aa).

The residue at position 2 (Ser-2) is an N-acetylserine. One can recognise a CAP-Gly domain in the interval Gly-27 to Arg-71. LRR repeat units lie at residues Asn-154–Ala-175, His-180–Thr-200, Ala-205–Met-226, Gly-230–Gln-252, Thr-253–Ala-274, Arg-278–Ile-299, and Ser-308–Asp-329. In terms of domain architecture, LRRCT spans Asn-342–Asp-384. Lys-463 is subject to N6-acetyllysine. A Phosphoserine modification is found at Ser-495.

Belongs to the TBCE family. In terms of assembly, supercomplex made of cofactors A to E. Cofactors A and D function by capturing and stabilizing tubulin in a quasi-native conformation. Cofactor E binds to the cofactor D-tubulin complex; interaction with cofactor C then causes the release of tubulin polypeptides that are committed to the native state. Cofactors B and E can form a heterodimer which binds to alpha-tubulin and enhances their ability to dissociate tubulin heterodimers. Interacts with TBCD.

The protein resides in the cytoplasm. It is found in the cytoskeleton. In terms of biological role, tubulin-folding protein; involved in the second step of the tubulin folding pathway and in the regulation of tubulin heterodimer dissociation. Required for correct organization of microtubule cytoskeleton and mitotic splindle, and maintenance of the neuronal microtubule network. This chain is Tubulin-specific chaperone E (TBCE), found in Pongo abelii (Sumatran orangutan).